Reading from the N-terminus, the 636-residue chain is DNA ligase (636 aa).

Lys-113 (N6-AMP-lysine intermediate) is an active-site residue. Residues 560–636 (NSEGIFQNQT…KSSFSKKFEK (77 aa)) enclose the BRCT domain.

This sequence belongs to the NAD-dependent DNA ligase family.

The enzyme catalyses NAD(+) + (deoxyribonucleotide)n-3'-hydroxyl + 5'-phospho-(deoxyribonucleotide)m = (deoxyribonucleotide)n+m + AMP + beta-nicotinamide D-nucleotide.. In terms of biological role, catalyzes the formation of phosphodiester linkages between 5'-phosphoryl and 3'-hydroxyl groups in double-stranded DNA using NAD as a coenzyme and as the energy source for the reaction. The protein is DNA ligase of Acanthamoeba polyphaga (Amoeba).